Here is a 174-residue protein sequence, read N- to C-terminus: Peptide methionine sulfoxide reductase MsrA (174 aa).

Cysteine 11 is a catalytic residue.

This sequence belongs to the MsrA Met sulfoxide reductase family.

It catalyses the reaction L-methionyl-[protein] + [thioredoxin]-disulfide + H2O = L-methionyl-(S)-S-oxide-[protein] + [thioredoxin]-dithiol. The enzyme catalyses [thioredoxin]-disulfide + L-methionine + H2O = L-methionine (S)-S-oxide + [thioredoxin]-dithiol. Functionally, has an important function as a repair enzyme for proteins that have been inactivated by oxidation. Catalyzes the reversible oxidation-reduction of methionine sulfoxide in proteins to methionine. The polypeptide is Peptide methionine sulfoxide reductase MsrA (Pasteurella multocida (strain Pm70)).